Reading from the N-terminus, the 302-residue chain is MNSERAQIANPPTQTPVPQQQEIPLAMVHGQPVLQIPQDLYIPPDALEVILDAFEGPLDLLLYLIRRQNLNILDIPVAEITRQYVDYINVMQELRFELAAEYLVMAAILAEIKSRMLLPRPPDIENEEGEDPRAELVRRLQEYERFKQAAEDLDALPRMDRDNSAAHAFVPDQTTVRIPPPVNMKELLLALQDVLKRAELFSGHAIRREALSVRQRMGDILAHLEGGKFHPFTALFTAEEGKLGVLVTFLAILELAKEQLLDIVQEASLGPIYIKSLATHHTNGALQLSSDFDNSPSTHVPP.

Belongs to the ScpA family. As to quaternary structure, component of a cohesin-like complex composed of ScpA, ScpB and the Smc homodimer, in which ScpA and ScpB bind to the head domain of Smc. The presence of the three proteins is required for the association of the complex with DNA.

The protein localises to the cytoplasm. In terms of biological role, participates in chromosomal partition during cell division. May act via the formation of a condensin-like complex containing Smc and ScpB that pull DNA away from mid-cell into both cell halves. This Xylella fastidiosa (strain Temecula1 / ATCC 700964) protein is Segregation and condensation protein A.